A 489-amino-acid chain; its full sequence is Cysteine--tRNA ligase (489 aa).

Residue cysteine 29 participates in Zn(2+) binding. A 'HIGH' region motif is present at residues 31-41; it reads ITSYDYCHIGH. Zn(2+) contacts are provided by cysteine 209, histidine 234, and glutamate 238. Residues 266–270 carry the 'KMSKS' region motif; that stretch reads KMSKS. Lysine 269 is an ATP binding site.

It belongs to the class-I aminoacyl-tRNA synthetase family. In terms of assembly, monomer. It depends on Zn(2+) as a cofactor.

Its subcellular location is the cytoplasm. The catalysed reaction is tRNA(Cys) + L-cysteine + ATP = L-cysteinyl-tRNA(Cys) + AMP + diphosphate. The polypeptide is Cysteine--tRNA ligase (Desulfotalea psychrophila (strain LSv54 / DSM 12343)).